Consider the following 420-residue polypeptide: Glutamyl-tRNA reductase (420 aa).

Residues 49–52, Ser-110, 115–117, and Gln-121 contribute to the substrate site; these read TCNR and EHQ. Catalysis depends on Cys-50, which acts as the Nucleophile. Position 190 to 195 (190 to 195) interacts with NADP(+); that stretch reads GSGTIN.

Belongs to the glutamyl-tRNA reductase family. Homodimer.

It carries out the reaction (S)-4-amino-5-oxopentanoate + tRNA(Glu) + NADP(+) = L-glutamyl-tRNA(Glu) + NADPH + H(+). It functions in the pathway porphyrin-containing compound metabolism; protoporphyrin-IX biosynthesis; 5-aminolevulinate from L-glutamyl-tRNA(Glu): step 1/2. Functionally, catalyzes the NADPH-dependent reduction of glutamyl-tRNA(Glu) to glutamate 1-semialdehyde (GSA). The chain is Glutamyl-tRNA reductase from Wigglesworthia glossinidia brevipalpis.